Consider the following 179-residue polypeptide: MKILITGRPGVGKTTLIKKLSCLLQNAGGFYTEEIRESGKRIGFKIVTLDGEEGILARTDLPFPYRVGKYYVNLKDLEEIGVRSLEGALREKNLIIVDEIGKMELLSSKFREVVEKIFDSEKDVIATIKKSSDPFVERIKSRDGVVVFELNEKNRDSLLKEILYVLKFNRGENNDTGAD.

Residues Gly-7–Thr-14 and Leu-94–Gly-101 each bind ATP.

Belongs to the THEP1 NTPase family.

The catalysed reaction is a ribonucleoside 5'-triphosphate + H2O = a ribonucleoside 5'-diphosphate + phosphate + H(+). Its function is as follows. Has nucleotide phosphatase activity towards ATP, GTP, CTP, TTP and UTP. May hydrolyze nucleoside diphosphates with lower efficiency. The chain is Nucleoside-triphosphatase THEP1 from Thermotoga petrophila (strain ATCC BAA-488 / DSM 13995 / JCM 10881 / RKU-1).